The sequence spans 100 residues: Urease subunit gamma (100 aa).

It belongs to the urease gamma subunit family. As to quaternary structure, heterotrimer of UreA (gamma), UreB (beta) and UreC (alpha) subunits. Three heterotrimers associate to form the active enzyme.

The protein localises to the cytoplasm. It catalyses the reaction urea + 2 H2O + H(+) = hydrogencarbonate + 2 NH4(+). It participates in nitrogen metabolism; urea degradation; CO(2) and NH(3) from urea (urease route): step 1/1. This chain is Urease subunit gamma, found in Synechococcus sp. (strain WH7805).